We begin with the raw amino-acid sequence, 62 residues long: UPF0291 protein CLB_2550 (62 aa).

It belongs to the UPF0291 family.

Its subcellular location is the cytoplasm. The sequence is that of UPF0291 protein CLB_2550 from Clostridium botulinum (strain ATCC 19397 / Type A).